The sequence spans 81 residues: MAEEVAELERIFKRFDANGDGKISSSELGETLKTLGSVTPEEIQRMMAEIDTDGDGFISFEEFKDFARANSGLIKDVAKIF.

2 EF-hand domains span residues 3-38 (EEVAELERIFKRFDANGDGKISSSELGETLKTLGSV) and 41-73 (EEIQRMMAEIDTDGDGFISFEEFKDFARANSGL). 9 residues coordinate Ca(2+): aspartate 16, asparagine 18, aspartate 20, lysine 22, glutamate 27, aspartate 51, aspartate 53, aspartate 55, and glutamate 62.

The protein is Polcalcin Syr v 3 (SYRV3) of Syringa vulgaris (Common lilac).